Consider the following 102-residue polypeptide: MTIPLYEVLILASILFAMGLACVVAWRANVIMMLIGIEIMLNAVMLTFVGGSAHWGIAEGQVFSLMIMALTSAEVSLALAMVAYLHRRKQSVDTDDFSSMKG.

3 consecutive transmembrane segments (helical) span residues 5 to 25, 30 to 50, and 62 to 82; these read LYEV…CVVA, VIMM…TFVG, and VFSL…LAMV.

It belongs to the complex I subunit 4L family. NDH-1 is composed of 14 different subunits. Subunits NuoA, H, J, K, L, M, N constitute the membrane sector of the complex.

Its subcellular location is the cell inner membrane. It carries out the reaction a quinone + NADH + 5 H(+)(in) = a quinol + NAD(+) + 4 H(+)(out). Functionally, NDH-1 shuttles electrons from NADH, via FMN and iron-sulfur (Fe-S) centers, to quinones in the respiratory chain. The immediate electron acceptor for the enzyme in this species is believed to be ubiquinone. Couples the redox reaction to proton translocation (for every two electrons transferred, four hydrogen ions are translocated across the cytoplasmic membrane), and thus conserves the redox energy in a proton gradient. This is NADH-quinone oxidoreductase subunit K 1 from Citrifermentans bemidjiense (strain ATCC BAA-1014 / DSM 16622 / JCM 12645 / Bem) (Geobacter bemidjiensis).